Here is a 65-residue protein sequence, read N- to C-terminus: Large ribosomal subunit protein bL33 (65 aa).

Residues 19 to 40 are disordered; it reads TVPSSKKRSAGVSRYTTEKNRR.

The protein belongs to the bacterial ribosomal protein bL33 family.

The chain is Large ribosomal subunit protein bL33 from Prochlorococcus marinus (strain NATL2A).